Reading from the N-terminus, the 271-residue chain is Nuclear egress protein 2 (271 aa).

Residues 1–249 (MSVVGKRVVD…LGRAVALVRR (249 aa)) are Perinuclear space-facing. A helical transmembrane segment spans residues 250 to 267 (SWPWISAGIAFLCLGLVW). At 268-271 (MRPS) the chain is on the nuclear side.

Belongs to the herpesviridae NEC2 protein family. In terms of assembly, forms a heterohexameric complex with NEC1. In terms of processing, phosphorylated.

The protein localises to the host nucleus inner membrane. Functionally, plays an essential role in virion nuclear egress, the first step of virion release from infected cell. Within the host nucleus, NEC1 interacts with the newly formed capsid through the vertexes and directs it to the inner nuclear membrane by associating with NEC2. Induces the budding of the capsid at the inner nuclear membrane as well as its envelopment into the perinuclear space. There, the NEC1/NEC2 complex promotes the fusion of the enveloped capsid with the outer nuclear membrane and the subsequent release of the viral capsid into the cytoplasm where it will reach the secondary budding sites in the host Golgi or trans-Golgi network. This is Nuclear egress protein 2 from Homo sapiens (Human).